A 278-amino-acid chain; its full sequence is Adenylate kinase (278 aa).

An ATP-binding site is contributed by 50 to 55 (GAGKGT). An NMP region spans residues 70 to 99 (ATGDMLRAQVAKGTALGKQAKKIMNEGGLV). AMP-binding positions include threonine 71, arginine 76, 97–99 (GLV), 126–129 (GFPR), and glutamine 133. The LID stretch occupies residues 167 to 204 (GRLVHPASGRSYHRIFNPPKDDMKDDITGEPLVQRSDD). ATP-binding positions include arginine 168 and 177–178 (SY). Residues arginine 201 and arginine 212 each contribute to the AMP site. ATP is bound at residue glutamine 240.

This sequence belongs to the adenylate kinase family. AK2 subfamily. In terms of assembly, monomer.

It localises to the cytoplasm. It is found in the cytosol. Its subcellular location is the mitochondrion intermembrane space. The enzyme catalyses AMP + ATP = 2 ADP. In terms of biological role, catalyzes the reversible transfer of the terminal phosphate group between ATP and AMP. Plays an important role in cellular energy homeostasis and in adenine nucleotide metabolism. Adenylate kinase activity is critical for regulation of the phosphate utilization and the AMP de novo biosynthesis pathways. The protein is Adenylate kinase (adk-1) of Neurospora crassa (strain ATCC 24698 / 74-OR23-1A / CBS 708.71 / DSM 1257 / FGSC 987).